Consider the following 435-residue polypeptide: tRNA(Ile)-lysidine synthase (435 aa).

23–28 (SGGMDS) provides a ligand contact to ATP.

The protein belongs to the tRNA(Ile)-lysidine synthase family.

The protein localises to the cytoplasm. It carries out the reaction cytidine(34) in tRNA(Ile2) + L-lysine + ATP = lysidine(34) in tRNA(Ile2) + AMP + diphosphate + H(+). Functionally, ligates lysine onto the cytidine present at position 34 of the AUA codon-specific tRNA(Ile) that contains the anticodon CAU, in an ATP-dependent manner. Cytidine is converted to lysidine, thus changing the amino acid specificity of the tRNA from methionine to isoleucine. This is tRNA(Ile)-lysidine synthase from Xanthomonas campestris pv. campestris (strain 8004).